Here is a 258-residue protein sequence, read N- to C-terminus: Acyl-[acyl-carrier-protein]--UDP-N-acetylglucosamine O-acyltransferase (258 aa).

This sequence belongs to the transferase hexapeptide repeat family. LpxA subfamily. As to quaternary structure, homotrimer.

The protein resides in the cytoplasm. It carries out the reaction a (3R)-hydroxyacyl-[ACP] + UDP-N-acetyl-alpha-D-glucosamine = a UDP-3-O-[(3R)-3-hydroxyacyl]-N-acetyl-alpha-D-glucosamine + holo-[ACP]. It functions in the pathway glycolipid biosynthesis; lipid IV(A) biosynthesis; lipid IV(A) from (3R)-3-hydroxytetradecanoyl-[acyl-carrier-protein] and UDP-N-acetyl-alpha-D-glucosamine: step 1/6. In terms of biological role, involved in the biosynthesis of lipid A, a phosphorylated glycolipid that anchors the lipopolysaccharide to the outer membrane of the cell. This is Acyl-[acyl-carrier-protein]--UDP-N-acetylglucosamine O-acyltransferase from Pseudomonas putida (strain GB-1).